The primary structure comprises 396 residues: Phosphoglycerate kinase (396 aa).

Substrate is bound by residues 21-23, R36, 59-62, R118, and R151; these read DFN and HLGR. Residues K201, G292, E323, and 349–352 each bind ATP; that span reads GGDS.

Belongs to the phosphoglycerate kinase family. In terms of assembly, monomer.

It is found in the cytoplasm. It carries out the reaction (2R)-3-phosphoglycerate + ATP = (2R)-3-phospho-glyceroyl phosphate + ADP. It functions in the pathway carbohydrate degradation; glycolysis; pyruvate from D-glyceraldehyde 3-phosphate: step 2/5. The sequence is that of Phosphoglycerate kinase from Leptospira borgpetersenii serovar Hardjo-bovis (strain L550).